Here is a 209-residue protein sequence, read N- to C-terminus: MLKPDNLPVTFGKNDVEIIARETLYRGFFSLDLYRFRHRLFNGQMSHEVRREIFERGHAAVLLPFDPVRDEVVLIEQIRIAAYDTSETPWLLEMVAGMIEEGESVEDVARREAIEEAGLIVKRTKPVLSFLASPGGTSERSSIMVGEVDATTASGIHGLADENEDIRVHVVSREQAYQWVEEGKIDNAASVIALQWLQLHHQALKNEWA.

Substrate is bound by residues 28-29, 51-52, R56, and R79; these read FF and RE. One can recognise a Nudix hydrolase domain in the interval 55–193; that stretch reads ERGHAAVLLP…KIDNAASVIA (139 aa). A96 serves as a coordination point for Mg(2+). A Nudix box motif is present at residues 97–118; the sequence is GMIEEGESVEDVARREAIEEAG. M98 is a binding site for substrate. Mg(2+)-binding residues include E112 and E116. Substrate is bound by residues 133 to 135 and E139; that span reads SPG. Residue E162 is the Proton acceptor of the active site. E164 lines the Mg(2+) pocket.

The protein belongs to the Nudix hydrolase family. NudF subfamily. In terms of assembly, homodimer. Mg(2+) is required as a cofactor.

It catalyses the reaction ADP-D-ribose + H2O = D-ribose 5-phosphate + AMP + 2 H(+). Inhibited by phosphorylated compounds such as AMP, ADP, ATP, 3-phosphoglyceric acid and PPi. Not inhibited by orthophosphate. Activity is high in cells grown in low glucose concentrations and decreases dramatically as glucose concentration increases. Its function is as follows. Acts on ADP-mannose and ADP-glucose as well as ADP-ribose. Prevents glycogen biosynthesis. The reaction catalyzed by this enzyme is a limiting step of the gluconeogenic process. In Escherichia coli O157:H7, this protein is ADP-ribose pyrophosphatase (nudF).